We begin with the raw amino-acid sequence, 81 residues long: ATP synthase subunit c (81 aa).

Helical transmembrane passes span 7 to 27 and 57 to 77; these read AASV…PGIG and LAFM…LLFA.

The protein belongs to the ATPase C chain family. In terms of assembly, F-type ATPases have 2 components, F(1) - the catalytic core - and F(0) - the membrane proton channel. F(1) has five subunits: alpha(3), beta(3), gamma(1), delta(1), epsilon(1). F(0) has four main subunits: a(1), b(1), b'(1) and c(10-14). The alpha and beta chains form an alternating ring which encloses part of the gamma chain. F(1) is attached to F(0) by a central stalk formed by the gamma and epsilon chains, while a peripheral stalk is formed by the delta, b and b' chains.

The protein localises to the cellular thylakoid membrane. Functionally, f(1)F(0) ATP synthase produces ATP from ADP in the presence of a proton or sodium gradient. F-type ATPases consist of two structural domains, F(1) containing the extramembraneous catalytic core and F(0) containing the membrane proton channel, linked together by a central stalk and a peripheral stalk. During catalysis, ATP synthesis in the catalytic domain of F(1) is coupled via a rotary mechanism of the central stalk subunits to proton translocation. Its function is as follows. Key component of the F(0) channel; it plays a direct role in translocation across the membrane. A homomeric c-ring of between 10-14 subunits forms the central stalk rotor element with the F(1) delta and epsilon subunits. This Synechococcus elongatus (strain ATCC 33912 / PCC 7942 / FACHB-805) (Anacystis nidulans R2) protein is ATP synthase subunit c.